The chain runs to 141 residues: Hemoglobin subunit alpha-3 (141 aa).

Position 1 is an N-acetylserine (S1). The Globin domain maps to 1–141 (SLSASEKAAV…VSAVLTSKYR (141 aa)). Position 58 (H58) interacts with O2. Position 87 (H87) interacts with heme b.

This sequence belongs to the globin family. Heterotetramer of two alpha chains and two beta chains. As to expression, red blood cells.

This is a tadpole (larval) alpha chain. The sequence is that of Hemoglobin subunit alpha-3 from Aquarana catesbeiana (American bullfrog).